The sequence spans 961 residues: Phosphofurin acidic cluster sorting protein 1 (961 aa).

A compositionally biased stretch (gly residues) spans 1–19 (MAERGGAGGGPGGSGGGSS). Disordered stretches follow at residues 1–70 (MAER…SSST) and 76–95 (VAVA…RTPA). Position 2 is an N-acetylalanine (Ala-2). A compositionally biased stretch (low complexity) spans 20-34 (QRGSGVAQSPQQQPQ). The residue at position 28 (Ser-28) is a Phosphoserine. Residues 35 to 46 (QQPPQPQQPTPP) show a composition bias toward pro residues. Phosphothreonine is present on Thr-44. Over residues 51 to 70 (ATSSSSSTSAAAASSSSSST) the composition is skewed to low complexity. Phosphotyrosine is present on Tyr-249. Residues 260–271 (GIKSKLSDRSPD) are compositionally biased toward basic and acidic residues. Disordered stretches follow at residues 260–297 (GIKS…LHGQ) and 375–426 (NPSD…GKDT). Positions 274–291 (NYSEEEEESFSSEQEGSD) are enriched in acidic residues. The stretch at 351–375 (HVSREQIREVEEDLDELYDSLEMYN) forms a coiled coil. Ser-377 and Ser-379 each carry phosphoserine. Polar residues predominate over residues 404–426 (MSQSSSQTEIGSLNSKGSLGKDT). Phosphoserine is present on residues Ser-428 and Ser-493. 2 disordered regions span residues 475–540 (EKVK…HSTQ) and 758–802 (SPST…SMSS). Residue Thr-502 is modified to Phosphothreonine. Phosphoserine occurs at positions 517, 526, 527, 529, and 532. A compositionally biased stretch (low complexity) spans 768–802 (SPVVSLTVPSTSPPSSSGLSRDATATPPSSPSMSS).

The protein belongs to the PACS family. In terms of assembly, associates with AP-1 and AP-3 but not with AP-2 complexes. Interacts with FURIN. Forms a ternary complex with FURIN and AP-1. Interacts with PKD2 (via acidic region). Interacts with SORL1. Interacts with WDR37.

Its subcellular location is the golgi apparatus. The protein resides in the trans-Golgi network. Functionally, coat protein that is involved in the localization of trans-Golgi network (TGN) membrane proteins that contain acidic cluster sorting motifs. Controls the endosome-to-Golgi trafficking of furin and mannose-6-phosphate receptor by connecting the acidic-cluster-containing cytoplasmic domain of these molecules with the adapter-protein complex-1 (AP-1) of endosomal clathrin-coated membrane pits. Required for normal ER Ca2+ handling in lymphocytes. Together with WDR37, it plays an essential role in lymphocyte development, quiescence and survival. Required for stabilizing peripheral lymphocyte populations. The polypeptide is Phosphofurin acidic cluster sorting protein 1 (Pacs1) (Mus musculus (Mouse)).